A 168-amino-acid chain; its full sequence is Transcriptional repressor NrdR (168 aa).

A disordered region spans residues 1–21 (MQCPACRHTDSRVLESRSSES). A zinc finger lies at 3–34 (CPACRHTDSRVLESRSSESGRSVRRRRECLSC). Residues 7–20 (RHTDSRVLESRSSE) are compositionally biased toward basic and acidic residues. An ATP-cone domain is found at 49 to 139 (ISVIKRNGDR…VYRQFRGVRD (91 aa)).

It belongs to the NrdR family. Requires Zn(2+) as cofactor.

Functionally, negatively regulates transcription of bacterial ribonucleotide reductase nrd genes and operons by binding to NrdR-boxes. This is Transcriptional repressor NrdR from Synechococcus elongatus (strain ATCC 33912 / PCC 7942 / FACHB-805) (Anacystis nidulans R2).